Consider the following 151-residue polypeptide: Large ribosomal subunit protein bL9 (151 aa).

Belongs to the bacterial ribosomal protein bL9 family.

In terms of biological role, binds to the 23S rRNA. This Lactobacillus delbrueckii subsp. bulgaricus (strain ATCC BAA-365 / Lb-18) protein is Large ribosomal subunit protein bL9.